A 319-amino-acid chain; its full sequence is Ferrochelatase (319 aa).

Fe cation contacts are provided by histidine 193 and glutamate 274.

The protein belongs to the ferrochelatase family.

The protein resides in the cytoplasm. The enzyme catalyses heme b + 2 H(+) = protoporphyrin IX + Fe(2+). It participates in porphyrin-containing compound metabolism; protoheme biosynthesis; protoheme from protoporphyrin-IX: step 1/1. In terms of biological role, catalyzes the ferrous insertion into protoporphyrin IX. This Actinobacillus pleuropneumoniae serotype 3 (strain JL03) protein is Ferrochelatase.